The sequence spans 204 residues: Urease accessory protein UreG (204 aa).

A GTP-binding site is contributed by 12 to 19 (GPVGSGKT).

It belongs to the SIMIBI class G3E GTPase family. UreG subfamily. Homodimer. UreD, UreF and UreG form a complex that acts as a GTP-hydrolysis-dependent molecular chaperone, activating the urease apoprotein by helping to assemble the nickel containing metallocenter of UreC. The UreE protein probably delivers the nickel.

The protein localises to the cytoplasm. Facilitates the functional incorporation of the urease nickel metallocenter. This process requires GTP hydrolysis, probably effectuated by UreG. The protein is Urease accessory protein UreG of Azotobacter vinelandii (strain DJ / ATCC BAA-1303).